The primary structure comprises 79 residues: DNA-directed RNA polymerase subunit omega (79 aa).

The protein belongs to the RNA polymerase subunit omega family. In terms of assembly, the RNAP catalytic core consists of 2 alpha, 1 beta, 1 beta' and 1 omega subunit. When a sigma factor is associated with the core the holoenzyme is formed, which can initiate transcription.

It catalyses the reaction RNA(n) + a ribonucleoside 5'-triphosphate = RNA(n+1) + diphosphate. Promotes RNA polymerase assembly. Latches the N- and C-terminal regions of the beta' subunit thereby facilitating its interaction with the beta and alpha subunits. The protein is DNA-directed RNA polymerase subunit omega of Kosmotoga olearia (strain ATCC BAA-1733 / DSM 21960 / TBF 19.5.1).